The primary structure comprises 106 residues: Putative double-stranded DNA mimic protein VP1949 (106 aa).

This sequence belongs to the putative dsDNA mimic protein family.

Its function is as follows. May act as a double-stranded DNA (dsDNA) mimic. Probably regulates the activity of a dsDNA-binding protein. This is Putative double-stranded DNA mimic protein VP1949 from Vibrio parahaemolyticus serotype O3:K6 (strain RIMD 2210633).